A 63-amino-acid chain; its full sequence is MKAKELREKSVEELNTELLNLLREQFNLRMQAASGQLQQSHLLKQVRRNIARVKTLLTEKAGA.

The protein belongs to the universal ribosomal protein uL29 family.

The sequence is that of Large ribosomal subunit protein uL29 from Proteus mirabilis (strain HI4320).